We begin with the raw amino-acid sequence, 255 residues long: Segregation and condensation protein A (255 aa).

The protein belongs to the ScpA family. As to quaternary structure, component of a cohesin-like complex composed of ScpA, ScpB and the Smc homodimer, in which ScpA and ScpB bind to the head domain of Smc. The presence of the three proteins is required for the association of the complex with DNA.

The protein resides in the cytoplasm. Functionally, participates in chromosomal partition during cell division. May act via the formation of a condensin-like complex containing Smc and ScpB that pull DNA away from mid-cell into both cell halves. In Lactiplantibacillus plantarum (strain ATCC BAA-793 / NCIMB 8826 / WCFS1) (Lactobacillus plantarum), this protein is Segregation and condensation protein A.